The sequence spans 170 residues: ATP synthase subunit b (170 aa).

Residues 11–31 form a helical membrane-spanning segment; the sequence is AFTFGDAFFTLFAFAILLVLI.

It belongs to the ATPase B chain family. As to quaternary structure, F-type ATPases have 2 components, F(1) - the catalytic core - and F(0) - the membrane proton channel. F(1) has five subunits: alpha(3), beta(3), gamma(1), delta(1), epsilon(1). F(0) has three main subunits: a(1), b(2) and c(10-14). The alpha and beta chains form an alternating ring which encloses part of the gamma chain. F(1) is attached to F(0) by a central stalk formed by the gamma and epsilon chains, while a peripheral stalk is formed by the delta and b chains.

The protein localises to the cell membrane. F(1)F(0) ATP synthase produces ATP from ADP in the presence of a proton or sodium gradient. F-type ATPases consist of two structural domains, F(1) containing the extramembraneous catalytic core and F(0) containing the membrane proton channel, linked together by a central stalk and a peripheral stalk. During catalysis, ATP synthesis in the catalytic domain of F(1) is coupled via a rotary mechanism of the central stalk subunits to proton translocation. Its function is as follows. Component of the F(0) channel, it forms part of the peripheral stalk, linking F(1) to F(0). In Listeria monocytogenes serotype 4b (strain F2365), this protein is ATP synthase subunit b.